Consider the following 356-residue polypeptide: Phenylalanine--tRNA ligase alpha subunit (356 aa).

E260 lines the Mg(2+) pocket.

This sequence belongs to the class-II aminoacyl-tRNA synthetase family. Phe-tRNA synthetase alpha subunit type 1 subfamily. As to quaternary structure, tetramer of two alpha and two beta subunits. Mg(2+) is required as a cofactor.

Its subcellular location is the cytoplasm. The enzyme catalyses tRNA(Phe) + L-phenylalanine + ATP = L-phenylalanyl-tRNA(Phe) + AMP + diphosphate + H(+). In Gluconobacter oxydans (strain 621H) (Gluconobacter suboxydans), this protein is Phenylalanine--tRNA ligase alpha subunit.